Here is a 574-residue protein sequence, read N- to C-terminus: Dihydroxy-acid dehydratase 2 (574 aa).

The tract at residues 1–20 is disordered; sequence MNAKTNIKQRLPSRHVTEGP. Cys-56 is a [2Fe-2S] cluster binding site. Asp-88 contacts Mg(2+). Cys-129 contributes to the [2Fe-2S] cluster binding site. The Mg(2+) site is built by Asp-130 and Lys-131. Residue Lys-131 is modified to N6-carboxylysine. Cys-201 lines the [2Fe-2S] cluster pocket. Glu-451 serves as a coordination point for Mg(2+). The Proton acceptor role is filled by Ser-477.

The protein belongs to the IlvD/Edd family. In terms of assembly, homodimer. The cofactor is [2Fe-2S] cluster. Mg(2+) serves as cofactor.

It carries out the reaction (2R)-2,3-dihydroxy-3-methylbutanoate = 3-methyl-2-oxobutanoate + H2O. It catalyses the reaction (2R,3R)-2,3-dihydroxy-3-methylpentanoate = (S)-3-methyl-2-oxopentanoate + H2O. It participates in amino-acid biosynthesis; L-isoleucine biosynthesis; L-isoleucine from 2-oxobutanoate: step 3/4. The protein operates within amino-acid biosynthesis; L-valine biosynthesis; L-valine from pyruvate: step 3/4. Its function is as follows. Functions in the biosynthesis of branched-chain amino acids. Catalyzes the dehydration of (2R,3R)-2,3-dihydroxy-3-methylpentanoate (2,3-dihydroxy-3-methylvalerate) into 2-oxo-3-methylpentanoate (2-oxo-3-methylvalerate) and of (2R)-2,3-dihydroxy-3-methylbutanoate (2,3-dihydroxyisovalerate) into 2-oxo-3-methylbutanoate (2-oxoisovalerate), the penultimate precursor to L-isoleucine and L-valine, respectively. The protein is Dihydroxy-acid dehydratase 2 of Bradyrhizobium diazoefficiens (strain JCM 10833 / BCRC 13528 / IAM 13628 / NBRC 14792 / USDA 110).